The chain runs to 122 residues: Large ribosomal subunit protein uL14 (122 aa).

This sequence belongs to the universal ribosomal protein uL14 family. In terms of assembly, part of the 50S ribosomal subunit. Forms a cluster with proteins L3 and L19. In the 70S ribosome, L14 and L19 interact and together make contacts with the 16S rRNA in bridges B5 and B8.

Its function is as follows. Binds to 23S rRNA. Forms part of two intersubunit bridges in the 70S ribosome. This Clostridioides difficile (strain 630) (Peptoclostridium difficile) protein is Large ribosomal subunit protein uL14.